The chain runs to 259 residues: ATP synthase subunit b 3 (259 aa).

A helical transmembrane segment spans residues 5 to 27; sequence WWTLGLQAINVLILIWILSRFLF.

The protein belongs to the ATPase B chain family. As to quaternary structure, F-type ATPases have 2 components, F(1) - the catalytic core - and F(0) - the membrane proton channel. F(1) has five subunits: alpha(3), beta(3), gamma(1), delta(1), epsilon(1). F(0) has three main subunits: a(1), b(2) and c(10-14). The alpha and beta chains form an alternating ring which encloses part of the gamma chain. F(1) is attached to F(0) by a central stalk formed by the gamma and epsilon chains, while a peripheral stalk is formed by the delta and b chains.

The protein localises to the cell inner membrane. In terms of biological role, f(1)F(0) ATP synthase produces ATP from ADP in the presence of a proton or sodium gradient. F-type ATPases consist of two structural domains, F(1) containing the extramembraneous catalytic core and F(0) containing the membrane proton channel, linked together by a central stalk and a peripheral stalk. During catalysis, ATP synthesis in the catalytic domain of F(1) is coupled via a rotary mechanism of the central stalk subunits to proton translocation. Functionally, component of the F(0) channel, it forms part of the peripheral stalk, linking F(1) to F(0). The polypeptide is ATP synthase subunit b 3 (Beijerinckia indica subsp. indica (strain ATCC 9039 / DSM 1715 / NCIMB 8712)).